The following is a 630-amino-acid chain: Lysophospholipase 3 (630 aa).

The first 16 residues, 1-16, serve as a signal peptide directing secretion; that stretch reads MKALLSLLTAVAVATA. One can recognise a PLA2c domain in the interval 39–587; the sequence is SCPATRPSIR…KEYCWNGTVD (549 aa). 15 N-linked (GlcNAc...) asparagine glycosylation sites follow: Asn56, Asn95, Asn164, Asn220, Asn283, Asn351, Asn390, Asn443, Asn456, Asn462, Asn493, Asn514, Asn542, Asn566, and Asn583. Asn606 carries the GPI-like-anchor amidated asparagine lipid modification. Residues 607 to 630 constitute a propeptide, removed in mature form; sequence AAYTQGVTWLVGILAVGVAMGMTA.

Belongs to the lysophospholipase family. Post-translationally, the GPI-like anchor contains a phosphoceramide lipid group.

It localises to the cell membrane. It catalyses the reaction a 1-acyl-sn-glycero-3-phosphocholine + H2O = sn-glycerol 3-phosphocholine + a fatty acid + H(+). Catalyzes the release of fatty acids from lysophospholipids. The sequence is that of Lysophospholipase 3 (plb3) from Aspergillus fumigatus (strain CBS 144.89 / FGSC A1163 / CEA10) (Neosartorya fumigata).